The sequence spans 741 residues: MAPGRELGAFLLALLAFCGGRRLAEAAGGPGGRRGAAADACGGRGLSSVTKSNGLLNITFKYDNCTPYLNSVGKHVIGDVQNITISQYACYEQVAVTILWTANAIGIEYLRGFRVILEELKSEGRQCQQMVLRDPKQLSPSFKRTGMESNPFANLKFETDYFVKIVPFPSIKNESNYHPFFFRTRPCELLLQPENLICKPYWKPRNLNVTQQGFNMQVSFDHAPHNFGFRYYFLHYKLKHEGPFKQKTCKQDQNTDTTSCILQNVTPGDYIIELVDDTNTTRKTMHYALKPVHSPWAGPIRAIAITVPLVVISAFATLFTVMCRKKQQENIYSHLDEESSESSAYGAGLPVERLRPRPKVFICYSSKDCQKHINVIQCFAYFLQDFCGCEVALDLWEDLKICKESQKEWLIKKINESQFIIIVCSKGMKYFVEKKNWKHRGVTKDTGKGELFLFAVFTVAEKLRQAKQNSNDLCKFIAVYFDYSCEGDIPGILDLSTKYKLMDNLPQLYSHLHSRDLSVQDSEVFPVNVSKRNYFRSKSGRSLYVAICNMHQFIDQEPDWFEKQFIPFLPHPLHYSEPVMEKFDSGLVLNDLVNKQAADDDFYLKTDVNIISAGSSDSHCIIQHLNLGEDVETQDIQRGGSSVLRPLLHAVKASNLKDMPRDSGIYDSSVPSSELSLPLMEGLLTDQTETSSITGSVSSSSGLGEEEPPVITSTKFLLPGICKAELHCHIHTDELQAIAPL.

The first 26 residues, 1-26, serve as a signal peptide directing secretion; it reads MAPGRELGAFLLALLAFCGGRRLAEA. The Extracellular segment spans residues 27 to 301; it reads AGGPGGRRGA…VHSPWAGPIR (275 aa). Asn57, Asn82, Asn173, Asn208, and Asn279 each carry an N-linked (GlcNAc...) asparagine glycan. The chain crosses the membrane as a helical span at residues 302–322; it reads AIAITVPLVVISAFATLFTVM. Residues 323-741 lie on the Cytoplasmic side of the membrane; it reads CRKKQQENIY…TDELQAIAPL (419 aa). Residues 357–510 enclose the SEFIR domain; sequence RPKVFICYSS…LMDNLPQLYS (154 aa). The span at 688–703 shows a compositional bias: low complexity; that stretch reads TETSSITGSVSSSSGL. The interval 688–708 is disordered; that stretch reads TETSSITGSVSSSSGLGEEEP.

The protein resides in the membrane. Functionally, feedback inhibitor of fibroblast growth factor mediated Ras-MAPK signaling and ERK activation. May inhibit FGF-induced FGFR1 tyrosine phosphorylation. Inhibits TGFB-induced epithelial-to-mesenchymal transition in lens epithelial cells. The polypeptide is Interleukin-17 receptor D (IL17RD) (Gallus gallus (Chicken)).